Reading from the N-terminus, the 311-residue chain is Hevamine-A (311 aa).

A signal peptide spans 1–26 (MAKRTQAILLLLLAISLIMSSSHVDG). The region spanning 27–302 (GGIAIYWGQN…SSILDSVLFL (276 aa)) is the GH18 domain. Cystine bridges form between Cys46-Cys93 and Cys76-Cys83. The Proton donor role is filled by Glu153. An intrachain disulfide couples Cys185 to Cys214. A propeptide spans 300–311 (LFLHSEECMTVL) (removed in mature form).

It belongs to the glycosyl hydrolase 18 family. Chitinase class II subfamily.

It localises to the vacuole. It carries out the reaction Random endo-hydrolysis of N-acetyl-beta-D-glucosaminide (1-&gt;4)-beta-linkages in chitin and chitodextrins.. The catalysed reaction is Hydrolysis of (1-&gt;4)-beta-linkages between N-acetylmuramic acid and N-acetyl-D-glucosamine residues in a peptidoglycan and between N-acetyl-D-glucosamine residues in chitodextrins.. Functionally, bifunctional enzyme with lysozyme / chitinase activity. May have a role in plugging the latex vessel and cessation of latex flow. This Hevea brasiliensis (Para rubber tree) protein is Hevamine-A.